We begin with the raw amino-acid sequence, 126 residues long: Desulfoferrodoxin (126 aa).

Residues cysteine 10, cysteine 13, cysteine 29, cysteine 30, histidine 49, histidine 69, histidine 75, cysteine 116, and histidine 119 each coordinate Fe cation.

It belongs to the desulfoferrodoxin family. Homodimer. Fe(3+) serves as cofactor. Requires Cu(2+) as cofactor.

The catalysed reaction is reduced [rubredoxin] + superoxide + 2 H(+) = oxidized [rubredoxin] + H2O2. In terms of biological role, catalyzes the one-electron reduction of superoxide anion radical to hydrogen peroxide at a nonheme ferrous iron center. Plays a fundamental role in case of oxidative stress via its superoxide detoxification activity. The polypeptide is Desulfoferrodoxin (dfx) (Desulfarculus baarsii (strain ATCC 33931 / DSM 2075 / LMG 7858 / VKM B-1802 / 2st14)).